Consider the following 349-residue polypeptide: Peroxidase 22 (349 aa).

Residues 1–29 form the signal peptide; the sequence is MGFSPSFSCSAIGALILGCLLLQASNSNA. Pyrrolidone carboxylic acid is present on Q30. 4 disulfides stabilise this stretch: C40/C120, C73/C78, C126/C329, and C206/C238. H71 serves as the catalytic Proton acceptor. Ca(2+) contacts are provided by D72, V75, G77, D79, and S81. N-linked (GlcNAc...) asparagine glycosylation is present at N86. P168 lines the substrate pocket. N173 and N187 each carry an N-linked (GlcNAc...) asparagine glycan. Residue H199 participates in heme b binding. Residue T200 participates in Ca(2+) binding. 2 N-linked (GlcNAc...) asparagine glycosylation sites follow: N217 and N243. 3 residues coordinate Ca(2+): D251, T254, and D259.

Belongs to the peroxidase family. Classical plant (class III) peroxidase subfamily. Heme b serves as cofactor. Ca(2+) is required as a cofactor. In terms of tissue distribution, mainly expressed in roots.

The protein resides in the secreted. It is found in the vacuole. It catalyses the reaction 2 a phenolic donor + H2O2 = 2 a phenolic radical donor + 2 H2O. In terms of biological role, removal of H(2)O(2), oxidation of toxic reductants, biosynthesis and degradation of lignin, suberization, auxin catabolism, response to environmental stresses such as wounding, pathogen attack and oxidative stress. These functions might be dependent on each isozyme/isoform in each plant tissue. The polypeptide is Peroxidase 22 (PER22) (Arabidopsis thaliana (Mouse-ear cress)).